Reading from the N-terminus, the 637-residue chain is Nuclear receptor subfamily 2 group C member 1-B (637 aa).

The nuclear receptor DNA-binding region spans 149–224 (VELCVVCGDK…LGMKQDSVQC (76 aa)). NR C4-type zinc fingers lie at residues 152–172 (CVVCGDKASGRHYGAVTCEGC) and 188–207 (CRGSKDCVINKHYRNRCQYC). In terms of domain architecture, NR LBD spans 383–624 (CVGSGSNLLP…SIIPYILRME (242 aa)).

It belongs to the nuclear hormone receptor family. NR2 subfamily.

It localises to the nucleus. In terms of biological role, orphan nuclear receptor. Binds the IR7 element in the promoter of its own gene in an autoregulatory negative feedback mechanism. Primarily repressor of a broad range of genes. Binds to hormone response elements (HREs) consisting of two 5'-AGGTCA-3' half site direct repeat consensus sequences. This chain is Nuclear receptor subfamily 2 group C member 1-B (nr2c1-b), found in Xenopus laevis (African clawed frog).